The following is a 765-amino-acid chain: E3 ubiquitin-protein ligase SlrP (765 aa).

The segment at M1–M453 is interaction with target proteins. LRR repeat units lie at residues Q200 to Q219, N221 to T242, I243 to S262, A263 to E284, L285 to E305, I306 to P325, G326 to P346, E347 to T368, I369 to A389, and L390 to F410. Positions G454–V461 are linker. An E3 ubiquitin-protein ligase catalytic domain region spans residues T462–R765. One can recognise an NEL domain in the interval P464 to S758. Residue C546 is the Glycyl thioester intermediate of the active site.

It belongs to the LRR-containing bacterial E3 ligase family. In terms of assembly, interacts with host TXN. Post-translationally, ubiquitinated in the presence of host E1 ubiquitin-activating enzyme, E2 ubiquitin-conjugating enzyme and ubiquitin.

It is found in the secreted. The protein resides in the host cytoplasm. The catalysed reaction is S-ubiquitinyl-[E2 ubiquitin-conjugating enzyme]-L-cysteine + [acceptor protein]-L-lysine = [E2 ubiquitin-conjugating enzyme]-L-cysteine + N(6)-ubiquitinyl-[acceptor protein]-L-lysine.. Functionally, effector proteins function to alter host cell physiology and promote bacterial survival in host tissues. This protein is an E3 ubiquitin ligase that interferes with host's ubiquitination pathway. Can ubiquitinate both ubiquitin and host TXN (thioredoxin). Leads to significant decrease of thioredoxin activity and increase of host cell death. This is E3 ubiquitin-protein ligase SlrP (slrP) from Salmonella typhimurium (strain 14028s / SGSC 2262).